Reading from the N-terminus, the 475-residue chain is Zinc finger protein 383 (475 aa).

The region spanning 6–77 (VMFSDVSIDF…GRELTRGLCS (72 aa)) is the KRAB domain. 11 consecutive C2H2-type zinc fingers follow at residues 170–192 (FECK…QRIH), 198–220 (YECK…LKIH), 226–248 (FECK…QRIH), 254–276 (YECK…QRIH), 282–304 (YACK…VRIH), 310–332 (YECK…QRIH), 338–360 (YECK…QRIH), 366–388 (YDCK…QRIH), 394–416 (FECL…QRIH), 422–444 (YECN…LRIH), and 450–472 (YNCK…QGIH).

It belongs to the krueppel C2H2-type zinc-finger protein family.

The protein localises to the nucleus. The protein resides in the cytoplasm. Its function is as follows. May function as a transcriptional repressor, suppressing transcriptional activities mediated by MAPK signaling pathways. The sequence is that of Zinc finger protein 383 (ZNF383) from Macaca fascicularis (Crab-eating macaque).